The sequence spans 58 residues: Small ribosomal subunit protein bS21 (58 aa).

The tract at residues 27-58 is disordered; the sequence is GTLQELRKREHYEKPSVKRKRKSEAARKRKKY. Basic and acidic residues predominate over residues 31-42; it reads ELRKREHYEKPS. The span at 43 to 58 shows a compositional bias: basic residues; the sequence is VKRKRKSEAARKRKKY.

The protein belongs to the bacterial ribosomal protein bS21 family.

The sequence is that of Small ribosomal subunit protein bS21 (rpsU) from Lactococcus lactis subsp. lactis (strain IL1403) (Streptococcus lactis).